Consider the following 296-residue polypeptide: Glycine--tRNA ligase alpha subunit (296 aa).

This sequence belongs to the class-II aminoacyl-tRNA synthetase family. In terms of assembly, tetramer of two alpha and two beta subunits.

The protein resides in the cytoplasm. It carries out the reaction tRNA(Gly) + glycine + ATP = glycyl-tRNA(Gly) + AMP + diphosphate. This Maricaulis maris (strain MCS10) (Caulobacter maris) protein is Glycine--tRNA ligase alpha subunit.